Here is a 316-residue protein sequence, read N- to C-terminus: Acetyl-coenzyme A carboxylase carboxyl transferase subunit alpha (316 aa).

The 254-residue stretch at 40 to 293 folds into the CoA carboxyltransferase C-terminal domain; that stretch reads LEKRSRDALR…GDLIAKTMKE (254 aa).

Belongs to the AccA family. Acetyl-CoA carboxylase is a heterohexamer composed of biotin carboxyl carrier protein (AccB), biotin carboxylase (AccC) and two subunits each of ACCase subunit alpha (AccA) and ACCase subunit beta (AccD).

It is found in the cytoplasm. The catalysed reaction is N(6)-carboxybiotinyl-L-lysyl-[protein] + acetyl-CoA = N(6)-biotinyl-L-lysyl-[protein] + malonyl-CoA. The protein operates within lipid metabolism; malonyl-CoA biosynthesis; malonyl-CoA from acetyl-CoA: step 1/1. Component of the acetyl coenzyme A carboxylase (ACC) complex. First, biotin carboxylase catalyzes the carboxylation of biotin on its carrier protein (BCCP) and then the CO(2) group is transferred by the carboxyltransferase to acetyl-CoA to form malonyl-CoA. The polypeptide is Acetyl-coenzyme A carboxylase carboxyl transferase subunit alpha (Mesorhizobium japonicum (strain LMG 29417 / CECT 9101 / MAFF 303099) (Mesorhizobium loti (strain MAFF 303099))).